The sequence spans 261 residues: Trifolitoxin immunity protein (261 aa).

Its function is as follows. Required for TFX resistance. This is Trifolitoxin immunity protein (tfxG) from Rhizobium leguminosarum bv. trifolii.